The chain runs to 817 residues: Collagen-like protein 4 (817 aa).

Collagen-like domains lie at 83–142 (GDTG…KGQD), 145–264 (GSKG…KGDD), and 268–327 (GIQG…KGLK). Disordered stretches follow at residues 87 to 107 (NKGEIGDNGENGDIGQIGDNG), 120 to 458 (FNGS…DKGD), and 479 to 543 (IIGD…KGDI). 2 N-linked (GlcNAc...) asparagine; by host glycosylation sites follow: Asn106 and Asn121. Basic and acidic residues-rich tracts occupy residues 126 to 141 (IKGDKGTDGIKGDKGQ) and 149 to 161 (QKGETGSKGDDGI). N-linked (GlcNAc...) asparagine; by host glycosylation occurs at Asn183. Composition is skewed to basic and acidic residues over residues 212–224 (IKGDPGNKGEDGI) and 233–245 (SKGETGSKGDDGT). Positions 246 to 260 (KGITGLKGTKGNSGS) are enriched in low complexity. Over residues 294-341 (KGSDGDKGNKGLDGIKGDLGDDGIKGDKGIKGLKGDTGNSDKGDKGSK) the composition is skewed to basic and acidic residues. Residues Asn345 and Asn360 are each glycosylated (N-linked (GlcNAc...) asparagine; by host). 2 Collagen-like domains span residues 352-411 (GDKG…KGLV) and 430-489 (GDKG…KGIK). Composition is skewed to basic and acidic residues over residues 354–368 (KGSKGDNGSKGESGD), 377–390 (SKGDIGDKGEKGDL), and 428–458 (SKGDKGESGDKGDIGIKGDKGAKGVTGDKGD). The segment covering 480–494 (IGDNGSKGIKGSSNN) has biased composition (low complexity). A glycan (N-linked (GlcNAc...) asparagine; by host) is linked at Asn483. 3 stretches are compositionally biased toward basic and acidic residues: residues 495–504 (KGDKGDKGNT), 515–525 (IKGDKGIKGSK), and 533–543 (EKGEKGTKGDI). Positions 512–570 (TKGIKGDKGIKGSKGDLGSVGEKGEKGTKGDIGTKGETGLKGIIGDKGELGSKGIKGLS) constitute a Collagen-like 6 domain. Asn709, Asn712, and Asn715 each carry an N-linked (GlcNAc...) asparagine; by host glycan. The span at 757 to 771 (GGGGASAFGNGGRGG) shows a compositional bias: gly residues. A disordered region spans residues 757–804 (GGGGASAFGNGGRGGNTTQAATKGEYGSGGGGGSEFSPSGSTNGGDGG). Asn772 carries an N-linked (GlcNAc...) asparagine; by host glycan.

May be hydroxylated on lysine by the viral-encoded procollagen-lysine,2-oxoglutarate 5-dioxygenase.

The protein localises to the virion. Its function is as follows. May participate in the formation of a layer of cross-linked glycosylated fibrils at the viral surface thus giving it a hairy-like appearance. This Acanthamoeba polyphaga (Amoeba) protein is Collagen-like protein 4.